Consider the following 299-residue polypeptide: tRNA dimethylallyltransferase (299 aa).

13-20 is an ATP binding site; it reads GPTASGKT. 15 to 20 serves as a coordination point for substrate; the sequence is TASGKT. The tract at residues 38–41 is interaction with substrate tRNA; it reads DSRQ.

Belongs to the IPP transferase family. In terms of assembly, monomer. Mg(2+) serves as cofactor.

The catalysed reaction is adenosine(37) in tRNA + dimethylallyl diphosphate = N(6)-dimethylallyladenosine(37) in tRNA + diphosphate. In terms of biological role, catalyzes the transfer of a dimethylallyl group onto the adenine at position 37 in tRNAs that read codons beginning with uridine, leading to the formation of N6-(dimethylallyl)adenosine (i(6)A). This Prochlorococcus marinus subsp. pastoris (strain CCMP1986 / NIES-2087 / MED4) protein is tRNA dimethylallyltransferase.